The following is an 878-amino-acid chain: MEVKGPSGRSFCCESEGQFKSCLKRHTPSLLLPSSWKGNSGSCLMAEALHRTSPTPNSCPLPLPLCRMSGVLCSRNLFTFKFSLFQLDSGASGEPGHSLGLTLGFSYCGNCQTAVVSAQPEGMASNGAYPVLGPGVTANPGTSLSVFTALPFTTPAPGPAHGPLLVTAGAPPGGPLVLSTFPSTPLVTEQDGCGPSGAGASNVFVQMRTEVGPVKAAQAQTLVLTQAPLVWQAPGALCGGVVCPPPLLLAAAPVVPVMAAQVVGGTQACEGGWSQGLPLPPPPPPAAQLPPIVSQGNAGPWPQGAHGESSLASSQAKAPPDDSCNPRSVYENFRLWQHYKPLARRHLPQSPDTEALSCFLIPVLRSLARRKPTMTLEEGLWRAMREWQHTSNFDRMIFYEMAEKFLEFEAEEEMQIQKSQWMKGPQCLPPPATPRLEPRGPPAPEVVKQPVYLPSKAGPKAPTACLPPPRPQRPVTKARRPPPRPHRRAETKARLPPPRPQRPAETKVPEEIPPEVVQEYVDIMEELLGPSLGATGEPEKQREEGKVKQPQEEDWTPPDPGLLSYIDKLCSQKDFVTKVEAVIHPQFLEELLSPDPQMDFLALSQDLEQEEGLTLAQLVEKRLPPLKEKQHARAAPSRGTARLDSSSSKFAAGQGAERDVPDPQQGVGMETCPPQMTARDSQGRGRAHTGMARSEDSVVLLGCQDSPGLRAAWPTSPPQDHRPTCPGVGTKDALDLPGGSPVRESHGLAQGSSEEEELPSLAFLLGSQHKLLPWWLPQSPVPASGLLSPEKWGPQGTHQSPSAERRGLNLAPSPANKAKKRPLFGSLSPAEKTPYPGPGLRVSGEQSLTWGLGGPSQSQKRKGDPLVSRKEKKQHCSQ.

Disordered regions lie at residues 273–324 (WSQG…DDSC), 417–512 (QKSQ…PEEI), 527–560 (LLGPSLGATGEPEKQREEGKVKQPQEEDWTPPDP), 624–693 (PPLK…GMAR), 709–757 (LRAA…EEEE), and 775–878 (WLPQ…HCSQ). Composition is skewed to pro residues over residues 278–288 (PLPPPPPPAAQ) and 427–444 (CLPPPATPRLEPRGPPAP). Over residues 476 to 487 (TKARRPPPRPHR) the composition is skewed to basic residues. A compositionally biased stretch (basic and acidic residues) spans 537-551 (EPEKQREEGKVKQPQ).

This sequence belongs to the NUT family.

The sequence is that of NUT family member 2B (NUTM2B) from Homo sapiens (Human).